The primary structure comprises 115 residues: NADH-ubiquinone oxidoreductase chain 3 (115 aa).

Helical transmembrane passes span 3 to 23 (LMLV…IAFW), 55 to 75 (FFLV…LLPL), and 87 to 107 (VLIM…YEWI).

Belongs to the complex I subunit 3 family. In terms of assembly, core subunit of respiratory chain NADH dehydrogenase (Complex I) which is composed of 45 different subunits. Interacts with TMEM186. Interacts with TMEM242.

The protein localises to the mitochondrion inner membrane. It carries out the reaction a ubiquinone + NADH + 5 H(+)(in) = a ubiquinol + NAD(+) + 4 H(+)(out). Functionally, core subunit of the mitochondrial membrane respiratory chain NADH dehydrogenase (Complex I) which catalyzes electron transfer from NADH through the respiratory chain, using ubiquinone as an electron acceptor. Essential for the catalytic activity of complex I. In Oryctolagus cuniculus (Rabbit), this protein is NADH-ubiquinone oxidoreductase chain 3.